A 185-amino-acid chain; its full sequence is Elongation factor P (185 aa).

It belongs to the elongation factor P family.

It localises to the cytoplasm. Its pathway is protein biosynthesis; polypeptide chain elongation. Involved in peptide bond synthesis. Stimulates efficient translation and peptide-bond synthesis on native or reconstituted 70S ribosomes in vitro. Probably functions indirectly by altering the affinity of the ribosome for aminoacyl-tRNA, thus increasing their reactivity as acceptors for peptidyl transferase. This Bacillus mycoides (strain KBAB4) (Bacillus weihenstephanensis) protein is Elongation factor P.